The sequence spans 180 residues: Crossover junction endodeoxyribonuclease RuvC (180 aa).

Active-site residues include Asp-7, Glu-66, and Asp-138. Residues Asp-7, Glu-66, and Asp-138 each coordinate Mg(2+).

It belongs to the RuvC family. In terms of assembly, homodimer which binds Holliday junction (HJ) DNA. The HJ becomes 2-fold symmetrical on binding to RuvC with unstacked arms; it has a different conformation from HJ DNA in complex with RuvA. In the full resolvosome a probable DNA-RuvA(4)-RuvB(12)-RuvC(2) complex forms which resolves the HJ. It depends on Mg(2+) as a cofactor.

It localises to the cytoplasm. It carries out the reaction Endonucleolytic cleavage at a junction such as a reciprocal single-stranded crossover between two homologous DNA duplexes (Holliday junction).. Its function is as follows. The RuvA-RuvB-RuvC complex processes Holliday junction (HJ) DNA during genetic recombination and DNA repair. Endonuclease that resolves HJ intermediates. Cleaves cruciform DNA by making single-stranded nicks across the HJ at symmetrical positions within the homologous arms, yielding a 5'-phosphate and a 3'-hydroxyl group; requires a central core of homology in the junction. The consensus cleavage sequence is 5'-(A/T)TT(C/G)-3'. Cleavage occurs on the 3'-side of the TT dinucleotide at the point of strand exchange. HJ branch migration catalyzed by RuvA-RuvB allows RuvC to scan DNA until it finds its consensus sequence, where it cleaves and resolves the cruciform DNA. The sequence is that of Crossover junction endodeoxyribonuclease RuvC from Janthinobacterium sp. (strain Marseille) (Minibacterium massiliensis).